The following is a 362-amino-acid chain: Cobalt-precorrin-5B C(1)-methyltransferase (362 aa).

Belongs to the CbiD family.

It catalyses the reaction Co-precorrin-5B + S-adenosyl-L-methionine = Co-precorrin-6A + S-adenosyl-L-homocysteine. Its pathway is cofactor biosynthesis; adenosylcobalamin biosynthesis; cob(II)yrinate a,c-diamide from sirohydrochlorin (anaerobic route): step 6/10. Catalyzes the methylation of C-1 in cobalt-precorrin-5B to form cobalt-precorrin-6A. This Burkholderia lata (strain ATCC 17760 / DSM 23089 / LMG 22485 / NCIMB 9086 / R18194 / 383) protein is Cobalt-precorrin-5B C(1)-methyltransferase.